The primary structure comprises 292 residues: 4-hydroxybenzoate octaprenyltransferase (292 aa).

8 helical membrane passes run 23–43 (PIGI…AGEG), 47–67 (PGVA…GCVI), 98–118 (LILF…MNWL), 141–161 (HLPQ…TFAA), 164–184 (GSIP…ALIY), 211–231 (YDRE…AGIG), 233–253 (YLGL…FSVY), and 270–290 (FLNN…DYLW).

This sequence belongs to the UbiA prenyltransferase family. The cofactor is Mg(2+).

Its subcellular location is the cell inner membrane. The catalysed reaction is all-trans-octaprenyl diphosphate + 4-hydroxybenzoate = 4-hydroxy-3-(all-trans-octaprenyl)benzoate + diphosphate. It functions in the pathway cofactor biosynthesis; ubiquinone biosynthesis. Its function is as follows. Catalyzes the prenylation of para-hydroxybenzoate (PHB) with an all-trans polyprenyl group. Mediates the second step in the final reaction sequence of ubiquinone-8 (UQ-8) biosynthesis, which is the condensation of the polyisoprenoid side chain with PHB, generating the first membrane-bound Q intermediate 3-octaprenyl-4-hydroxybenzoate. The protein is 4-hydroxybenzoate octaprenyltransferase of Methylococcus capsulatus (strain ATCC 33009 / NCIMB 11132 / Bath).